Consider the following 75-residue polypeptide: Parvalbumin beta 3 (75 aa).

A1 is modified (N-acetylalanine). One can recognise an EF-hand domain in the interval 26-61 (YKAFFAKKAFFVIDQDKSGFIEEDELKLFLQVFSAG). Ca(2+)-binding residues include D39, D41, S43, F45, E47, and E50.

Belongs to the parvalbumin family.

Its function is as follows. In muscle, parvalbumin is thought to be involved in relaxation after contraction. It binds two calcium ions. The polypeptide is Parvalbumin beta 3 (Merluccius gayi (South Pacific hake)).